Here is a 388-residue protein sequence, read N- to C-terminus: Flavin-dependent monooxygenase (388 aa).

Residue Arg-54 coordinates NADPH. Asp-61, Arg-117, and Asp-311 together coordinate FAD.

It belongs to the aromatic-ring hydroxylase family. TetX subfamily. As to quaternary structure, monomer. The cofactor is FAD.

It localises to the cytoplasm. The catalysed reaction is a tetracycline + NADPH + O2 + H(+) = an 11a-hydroxytetracycline + NADP(+) + H2O. It carries out the reaction tetracycline + NADPH + O2 + H(+) = 11a-hydroxytetracycline + NADP(+) + H2O. The enzyme catalyses oxytetracycline + NADPH + O2 + H(+) = 11a-hydroxy-oxytetracycline + NADP(+) + H2O. In terms of biological role, an FAD-requiring monooxygenase active on some tetracycline antibiotic derivatives, which leads to their inactivation. Hydroxylates carbon 11a of tetracycline and some analogs. Functionally, confers resistance to tetracycline via an oxidoreductase activity; NADPH is more active than NAD. Expression in E.coli leads to breakdown of tetracycline. Confers resistance to doxycycline, chlortetracycline, oxytetracycline and minocycline. The chain is Flavin-dependent monooxygenase from Bacteroides fragilis.